The chain runs to 247 residues: 23S rRNA (guanosine-2'-O-)-methyltransferase RlmB (247 aa).

Positions 197, 217, and 226 each coordinate S-adenosyl-L-methionine.

This sequence belongs to the class IV-like SAM-binding methyltransferase superfamily. RNA methyltransferase TrmH family. RlmB subfamily.

The protein resides in the cytoplasm. The enzyme catalyses guanosine(2251) in 23S rRNA + S-adenosyl-L-methionine = 2'-O-methylguanosine(2251) in 23S rRNA + S-adenosyl-L-homocysteine + H(+). In terms of biological role, specifically methylates the ribose of guanosine 2251 in 23S rRNA. This Vibrio cholerae serotype O1 (strain ATCC 39315 / El Tor Inaba N16961) protein is 23S rRNA (guanosine-2'-O-)-methyltransferase RlmB.